Consider the following 183-residue polypeptide: Glutathione-regulated potassium-efflux system ancillary protein KefG (183 aa).

Belongs to the NAD(P)H dehydrogenase (quinone) family. KefG subfamily. As to quaternary structure, interacts with KefB.

The protein resides in the cell inner membrane. It carries out the reaction a quinone + NADH + H(+) = a quinol + NAD(+). The enzyme catalyses a quinone + NADPH + H(+) = a quinol + NADP(+). In terms of biological role, regulatory subunit of a potassium efflux system that confers protection against electrophiles. Required for full activity of KefB. This chain is Glutathione-regulated potassium-efflux system ancillary protein KefG, found in Enterobacter sp. (strain 638).